Consider the following 373-residue polypeptide: Malate dehydrogenase, mitochondrial (373 aa).

NAD(+) is bound by residues 69 to 75 (GAAGGIG) and Asp-95. Substrate-binding residues include Arg-141 and Arg-147. NAD(+) contacts are provided by residues Asn-154 and 177 to 179 (ISN). Substrate contacts are provided by Asn-179 and Arg-213. The active-site Proton acceptor is His-237. Met-288 serves as a coordination point for NAD(+).

The protein belongs to the LDH/MDH superfamily. MDH type 1 family. Homodimer.

The protein localises to the mitochondrion matrix. The enzyme catalyses (S)-malate + NAD(+) = oxaloacetate + NADH + H(+). The polypeptide is Malate dehydrogenase, mitochondrial (Chlamydomonas reinhardtii (Chlamydomonas smithii)).